The primary structure comprises 234 residues: Geranylgeranylglyceryl phosphate synthase (234 aa).

Residues aspartate 24 and serine 52 each contribute to the Mg(2+) site. Residues tyrosine 172 to glycine 178, glycine 203 to glycine 204, and glycine 225 to threonine 226 each bind sn-glycerol 1-phosphate.

The protein belongs to the GGGP/HepGP synthase family. Group II subfamily. Homodimer. Mg(2+) serves as cofactor.

The enzyme catalyses sn-glycerol 1-phosphate + (2E,6E,10E)-geranylgeranyl diphosphate = sn-3-O-(geranylgeranyl)glycerol 1-phosphate + diphosphate. Prenyltransferase that catalyzes the transfer of the geranylgeranyl moiety of geranylgeranyl diphosphate (GGPP) to the C3 hydroxyl of sn-glycerol-1-phosphate (G1P). This Zunongwangia profunda (strain DSM 18752 / CCTCC AB 206139 / SM-A87) (Wangia profunda) protein is Geranylgeranylglyceryl phosphate synthase.